The following is a 438-amino-acid chain: L-fucose-proton symporter (438 aa).

Over 2-26 (GNTSIQTQSYRAVDKDAGQSRSYII) the chain is Cytoplasmic. A helical transmembrane segment spans residues 27-53 (PFALLCSLFFLWAVANNLNDILLPQFQ). Residues 54–61 (QAFTLTNF) are Periplasmic-facing. The helical transmembrane segment at 62 to 87 (QAGLIQSAFYFGYFIIPIPAGILMKK) threads the bilayer. The Cytoplasmic portion of the chain corresponds to 88-90 (LSY). A helical membrane pass occupies residues 91–113 (KAGIITGLFLYALGAALFWPAAE). The Periplasmic segment spans residues 114 to 117 (IMNY). Residues 118–144 (TLFLVGLFIIAAGLGCLETAANPFVTV) traverse the membrane as a helical segment. Over 145–150 (LGPESS) the chain is Cytoplasmic. A helical membrane pass occupies residues 151 to 178 (GHFRLNLAQTFNSFGAIIAVVFGQSLIL). Residues 179–193 (SNVPHQSQDVLDKMS) lie on the Periplasmic side of the membrane. A helical membrane pass occupies residues 194 to 227 (PEQLSAYKHSLVLSVQTPYMIIVAIVLLVALLIM). Topologically, residues 228-257 (LTKFPALQSDNHSDAKQGSFSASLSRLARI) are cytoplasmic. The chain crosses the membrane as a helical span at residues 258–287 (RHWRWAVLAQFCYVGAQTACWSYLIRYAVE). Over 288-293 (EIPGMT) the chain is Periplasmic. A helical transmembrane segment spans residues 294–319 (AGFAANYLTGTMVCFFIGRFTGTWLI). The Cytoplasmic portion of the chain corresponds to 320-324 (SRFAP). Residues 325 to 343 (HKVLAAYALIAMALCLISA) traverse the membrane as a helical segment. Over 344–347 (FAGG) the chain is Periplasmic. A helical membrane pass occupies residues 348–372 (HVGLIALTLCSAFMSIQYPTIFSLG). Topologically, residues 373 to 379 (IKNLGQD) are cytoplasmic. The chain crosses the membrane as a helical span at residues 380–407 (TKYGSSFIVMTIIGGGIVTPVMGFVSDA). Residues 408 to 410 (AGN) are Periplasmic-facing. Residues 411 to 430 (IPTAELIPALCFAVIFIFAR) traverse the membrane as a helical segment. Residues 431 to 438 (FRSQTATN) lie on the Cytoplasmic side of the membrane.

The protein belongs to the major facilitator superfamily. FHS transporter (TC 2.A.1.7) family.

It localises to the cell inner membrane. It carries out the reaction L-fucose(in) + H(+)(in) = L-fucose(out) + H(+)(out). The enzyme catalyses D-arabinose(out) + H(+)(out) = D-arabinose(in) + H(+)(in). The catalysed reaction is L-galactose(out) + H(+)(out) = L-galactose(in) + H(+)(in). Mediates the uptake of L-fucose across the boundary membrane with the concomitant transport of protons into the cell (symport system). Can also transport L-galactose and D-arabinose, but at reduced rates compared with L-fucose. Is not able to transport L-rhamnose and L-arabinose. Binds D-arabinose with the highest affinity, followed by L-fucose, and then by L-galactose. In Escherichia coli (strain K12), this protein is L-fucose-proton symporter (fucP).